Reading from the N-terminus, the 356-residue chain is tRNA N6-adenosine threonylcarbamoyltransferase (356 aa).

Fe cation contacts are provided by His115 and His119. Substrate is bound by residues 138–142 (LVSGG), Asp171, Gly184, and Asn283. Asp311 contributes to the Fe cation binding site.

Belongs to the KAE1 / TsaD family. The cofactor is Fe(2+).

The protein localises to the cytoplasm. It carries out the reaction L-threonylcarbamoyladenylate + adenosine(37) in tRNA = N(6)-L-threonylcarbamoyladenosine(37) in tRNA + AMP + H(+). Required for the formation of a threonylcarbamoyl group on adenosine at position 37 (t(6)A37) in tRNAs that read codons beginning with adenine. Is involved in the transfer of the threonylcarbamoyl moiety of threonylcarbamoyl-AMP (TC-AMP) to the N6 group of A37, together with TsaE and TsaB. TsaD likely plays a direct catalytic role in this reaction. This is tRNA N6-adenosine threonylcarbamoyltransferase from Prochlorococcus marinus (strain MIT 9313).